Reading from the N-terminus, the 418-residue chain is MRIMMNKKNIKRNVEKIIAQWDERTRKNKENFDFGELTLSTGLPGIILMLAELKNKDNSKIYQKKIDNYIEYIVSKLSTYGLLTGSLYSGAAGIALSILHLREDDEKYKNLLDSLNRYIEYFVREKIEGFNLENITPPDYDVIEGLSGILSYLLLINDEQYDDLKILIINFLSNLTKENNGLISLYIKSENQMSQSESEMYPLGCLNMGLAHGLAGVGCILAYAHIKGYSNEASLSALQKIIFIYEKFELERKKQFLWKDGLVADELKKEKVIREASFIRDAWCYGGPGISLLYLYGGLALDNDYFVDKAEKILESAMQRKLGIDSYMICHGYSGLIEICSLFKRLLNTKKFDSYMEEFNVNSEQILEEYGDESGTGFLEGISGCILVLSKFEYSINFTYWRQALLLFDDFLKGGKRK.

To B.subtilis SpaC and S.epidermidis EpiC.

In terms of biological role, could be implicated in the processing or the export process of the nisin lantibiotic. This chain is Nisin biosynthesis protein NisC (nisC), found in Lactococcus lactis subsp. lactis (Streptococcus lactis).